Reading from the N-terminus, the 420-residue chain is Histidine--tRNA ligase (420 aa).

The protein belongs to the class-II aminoacyl-tRNA synthetase family. Homodimer.

It is found in the cytoplasm. It carries out the reaction tRNA(His) + L-histidine + ATP = L-histidyl-tRNA(His) + AMP + diphosphate + H(+). This is Histidine--tRNA ligase from Anaplasma phagocytophilum (strain HZ).